We begin with the raw amino-acid sequence, 125 residues long: Ribonuclease VapC19 (125 aa).

One can recognise a PINc domain in the interval 3 to 122 (LIDTTIAVDH…RHFPMFPDLQ (120 aa)). Positions 5 and 93 each coordinate Mg(2+).

This sequence belongs to the PINc/VapC protein family. Mg(2+) serves as cofactor.

Its function is as follows. Toxic component of a type II toxin-antitoxin (TA) system. An RNase. Its toxic effect is neutralized by coexpression with cognate antitoxin VapB19. The protein is Ribonuclease VapC19 of Mycobacterium tuberculosis (strain CDC 1551 / Oshkosh).